The following is a 795-amino-acid chain: RINT1-like protein MAG2 (795 aa).

Residues 35-64 (TGLVSELQTEISELDQRLAGLNRQLESGLA) are a coiled coil. The disordered stretch occupies residues 91-111 (TSVTRSASDSGKEEEATEHVA). Positions 100–111 (SGKEEEATEHVA) are enriched in basic and acidic residues. The RINT1/TIP20 domain occupies 207–795 (ALAMMRPQAI…KKVAKSRVFS (589 aa)).

Belongs to the RINT1 family. In terms of assembly, interacts with SEC20 and SYP81. Interacts with ZW10 (via the central region). Forms a complex with ZW10/MIP1, MIP2 and MIP3 on the endoplasmic reticulum. In terms of tissue distribution, highly expressed in dry seeds. Expressed at low levels in roots, rosette and cauline leaves, stems and flowers.

It is found in the endoplasmic reticulum membrane. Its function is as follows. Functions in the anterograde transport of storage protein precursors from the endoplasmic reticulum (ER) to the Golgi complex and in the retrograde transport from the Golgi complex to the ER. Forms a complex with ZW10/MIP1, MIP2 and MIP3 on the ER that may be responsible for efficient transport of seed storage proteins. Required for the responses to environmental stresses during seed germination and vegetative growth. Probably not involved in the retrograde transport from the ER to the apoplast. This chain is RINT1-like protein MAG2, found in Arabidopsis thaliana (Mouse-ear cress).